Consider the following 1091-residue polypeptide: ATP-dependent helicase/deoxyribonuclease subunit B (1091 aa).

It belongs to the helicase family. AddB/RexB type 2 subfamily. In terms of assembly, heterodimer of AddA and RexB. It depends on Mg(2+) as a cofactor.

Its function is as follows. The heterodimer acts as both an ATP-dependent DNA helicase and an ATP-dependent, dual-direction single-stranded exonuclease. Recognizes the chi site generating a DNA molecule suitable for the initiation of homologous recombination. This subunit has 5' -&gt; 3' nuclease activity but not helicase activity. The protein is ATP-dependent helicase/deoxyribonuclease subunit B of Streptococcus pneumoniae serotype 19F (strain G54).